A 476-amino-acid polypeptide reads, in one-letter code: Eukaryotic translation initiation factor 3 subunit L (476 aa).

Positions 257 to 452 (DAIRMFSHIL…DLDYALEKDL (196 aa)) constitute a PCI domain.

Belongs to the eIF-3 subunit L family. As to quaternary structure, component of the eukaryotic translation initiation factor 3 (eIF-3) complex.

Its subcellular location is the cytoplasm. Functionally, component of the eukaryotic translation initiation factor 3 (eIF-3) complex, which is involved in protein synthesis of a specialized repertoire of mRNAs and, together with other initiation factors, stimulates binding of mRNA and methionyl-tRNAi to the 40S ribosome. The eIF-3 complex specifically targets and initiates translation of a subset of mRNAs involved in cell proliferation. This Emericella nidulans (strain FGSC A4 / ATCC 38163 / CBS 112.46 / NRRL 194 / M139) (Aspergillus nidulans) protein is Eukaryotic translation initiation factor 3 subunit L.